Reading from the N-terminus, the 547-residue chain is Auxin transporter-like protein 3 (547 aa).

Topologically, residues M1–Q74 are cytoplasmic. The chain crosses the membrane as a helical span at residues V75–A92. Residues S93–G94 are Extracellular-facing. Residues L95–L115 form a helical membrane-spanning segment. The Cytoplasmic segment spans residues Y116–N151. Residues V152–C172 traverse the membrane as a helical segment. Residues A173–T187 are Extracellular-facing. A helical transmembrane segment spans residues W188–Y208. Over R209–W211 the chain is Cytoplasmic. Residues S212–I232 form a helical membrane-spanning segment. Residues H233 to I247 are Extracellular-facing. A helical transmembrane segment spans residues V248 to V268. Over E269–K281 the chain is Cytoplasmic. The helical transmembrane segment at A282 to A302 threads the bilayer. Residues Y303–A329 are Extracellular-facing. A helical membrane pass occupies residues V330–F350. Topologically, residues V351–R371 are cytoplasmic. Residues L372–N392 traverse the membrane as a helical segment. Residue S393 is a topological domain, extracellular. The helical transmembrane segment at A394 to V414 threads the bilayer. The Cytoplasmic portion of the chain corresponds to T415–Y440. The helical transmembrane segment at V441–A461 threads the bilayer. The Extracellular portion of the chain corresponds to S462–L547. A glycan (N-linked (GlcNAc...) asparagine) is linked at N509.

The protein belongs to the amino acid/polyamine transporter 2 family. Amino acid/auxin permease (AAAP) (TC 2.A.18.1) subfamily.

It is found in the cell membrane. Carrier protein involved in proton-driven auxin influx. May mediate the formation of auxin gradient from developing leaves (site of auxin biosynthesis) to tips. This Oryza sativa subsp. japonica (Rice) protein is Auxin transporter-like protein 3.